A 222-amino-acid chain; its full sequence is V-type ATP synthase subunit D (222 aa).

The protein belongs to the V-ATPase D subunit family.

Functionally, produces ATP from ADP in the presence of a proton gradient across the membrane. The sequence is that of V-type ATP synthase subunit D from Deinococcus geothermalis (strain DSM 11300 / CIP 105573 / AG-3a).